Reading from the N-terminus, the 147-residue chain is Phosphoribosyl-AMP cyclohydrolase (147 aa).

D91 is a binding site for Mg(2+). C92 provides a ligand contact to Zn(2+). Residues D93 and D95 each coordinate Mg(2+). Positions 109 and 116 each coordinate Zn(2+).

This sequence belongs to the PRA-CH family. Homodimer. The cofactor is Mg(2+). Zn(2+) is required as a cofactor.

The protein localises to the cytoplasm. The catalysed reaction is 1-(5-phospho-beta-D-ribosyl)-5'-AMP + H2O = 1-(5-phospho-beta-D-ribosyl)-5-[(5-phospho-beta-D-ribosylamino)methylideneamino]imidazole-4-carboxamide. It functions in the pathway amino-acid biosynthesis; L-histidine biosynthesis; L-histidine from 5-phospho-alpha-D-ribose 1-diphosphate: step 3/9. In terms of biological role, catalyzes the hydrolysis of the adenine ring of phosphoribosyl-AMP. This Rhodopseudomonas palustris (strain BisB18) protein is Phosphoribosyl-AMP cyclohydrolase.